A 210-amino-acid polypeptide reads, in one-letter code: Na(+)-translocating NADH-quinone reductase subunit D (210 aa).

Helical transmembrane passes span 11–31 (ILAP…VCSA), 42–62 (FVMT…VSLI), 72–92 (IIVQ…VLKA), 103–123 (VFVG…AFAM), 131–151 (FIDG…VGFF), and 178–198 (NGLM…IWAI).

Belongs to the NqrDE/RnfAE family. In terms of assembly, composed of six subunits; NqrA, NqrB, NqrC, NqrD, NqrE and NqrF.

The protein resides in the cell inner membrane. It carries out the reaction a ubiquinone + n Na(+)(in) + NADH + H(+) = a ubiquinol + n Na(+)(out) + NAD(+). NQR complex catalyzes the reduction of ubiquinone-1 to ubiquinol by two successive reactions, coupled with the transport of Na(+) ions from the cytoplasm to the periplasm. NqrA to NqrE are probably involved in the second step, the conversion of ubisemiquinone to ubiquinol. The protein is Na(+)-translocating NADH-quinone reductase subunit D of Vibrio atlanticus (strain LGP32) (Vibrio splendidus (strain Mel32)).